The chain runs to 122 residues: Large ribosomal subunit protein uL14c (122 aa).

Belongs to the universal ribosomal protein uL14 family. As to quaternary structure, part of the 50S ribosomal subunit.

Its subcellular location is the plastid. It is found in the chloroplast. Its function is as follows. Binds to 23S rRNA. This chain is Large ribosomal subunit protein uL14c, found in Phalaenopsis aphrodite subsp. formosana (Moth orchid).